The chain runs to 217 residues: ATP-dependent Clp protease proteolytic subunit (217 aa).

S121 (nucleophile) is an active-site residue. H146 is a catalytic residue.

The protein belongs to the peptidase S14 family. In terms of assembly, fourteen ClpP subunits assemble into 2 heptameric rings which stack back to back to give a disk-like structure with a central cavity, resembling the structure of eukaryotic proteasomes.

It localises to the cytoplasm. It catalyses the reaction Hydrolysis of proteins to small peptides in the presence of ATP and magnesium. alpha-casein is the usual test substrate. In the absence of ATP, only oligopeptides shorter than five residues are hydrolyzed (such as succinyl-Leu-Tyr-|-NHMec, and Leu-Tyr-Leu-|-Tyr-Trp, in which cleavage of the -Tyr-|-Leu- and -Tyr-|-Trp bonds also occurs).. Functionally, cleaves peptides in various proteins in a process that requires ATP hydrolysis. Has a chymotrypsin-like activity. Plays a major role in the degradation of misfolded proteins. The sequence is that of ATP-dependent Clp protease proteolytic subunit from Burkholderia cenocepacia (strain HI2424).